We begin with the raw amino-acid sequence, 94 residues long: Pyrimidine/purine nucleoside phosphorylase (94 aa).

Belongs to the nucleoside phosphorylase PpnP family.

It carries out the reaction a purine D-ribonucleoside + phosphate = a purine nucleobase + alpha-D-ribose 1-phosphate. The catalysed reaction is adenosine + phosphate = alpha-D-ribose 1-phosphate + adenine. The enzyme catalyses cytidine + phosphate = cytosine + alpha-D-ribose 1-phosphate. It catalyses the reaction guanosine + phosphate = alpha-D-ribose 1-phosphate + guanine. It carries out the reaction inosine + phosphate = alpha-D-ribose 1-phosphate + hypoxanthine. The catalysed reaction is thymidine + phosphate = 2-deoxy-alpha-D-ribose 1-phosphate + thymine. The enzyme catalyses uridine + phosphate = alpha-D-ribose 1-phosphate + uracil. It catalyses the reaction xanthosine + phosphate = alpha-D-ribose 1-phosphate + xanthine. Its function is as follows. Catalyzes the phosphorolysis of diverse nucleosides, yielding D-ribose 1-phosphate and the respective free bases. Can use uridine, adenosine, guanosine, cytidine, thymidine, inosine and xanthosine as substrates. Also catalyzes the reverse reactions. This chain is Pyrimidine/purine nucleoside phosphorylase, found in Salmonella newport (strain SL254).